Here is an 87-residue protein sequence, read N- to C-terminus: Small ribosomal subunit protein bS21 (87 aa).

A compositionally biased stretch (basic and acidic residues) spans 47 to 63 (YEKPSEKRARQKAEAVR). The tract at residues 47-87 (YEKPSEKRARQKAEAVRRARKLARKRAQREGLLPMPKKPGR) is disordered. Residues 64–73 (RARKLARKRA) are compositionally biased toward basic residues.

The protein belongs to the bacterial ribosomal protein bS21 family.

This Caulobacter vibrioides (strain ATCC 19089 / CIP 103742 / CB 15) (Caulobacter crescentus) protein is Small ribosomal subunit protein bS21.